Consider the following 4363-residue polypeptide: AM-toxin synthetase AMT1 (4363 aa).

The tract at residues 278-670 (AGQAKQRPHA…GSLLYVGRKD (393 aa)) is adenylation 1. One can recognise a Carrier 1 domain in the interval 810–887 (APDSVIARQL…ALAAIAKVIP (78 aa)). Ser847 is modified (O-(pantetheine 4'-phosphoryl)serine). Positions 926–1340 (EDVYACTPLQ…TLGQIDVLTS (415 aa)) are condensation 1. The interval 1368–1765 (KQARTRPGAI…LGRKDTQIKI (398 aa)) is adenylation 2. One can recognise a Carrier 2 domain in the interval 1884 to 1961 (PPVTDMEKHV…DQARHVTLLT (78 aa)). O-(pantetheine 4'-phosphoryl)serine is present on Ser1922. The segment at 1999-2410 (EDVYPCTPLQ…ASPSSSTLVS (412 aa)) is condensation 2. The adenylation 3 stretch occupies residues 2448–2853 (RKKALAAPQA…GRKDNQVKIR (406 aa)). One can recognise a Carrier 3 domain in the interval 2977-3053 (LPSTVMEETL…DLAACCTDRR (77 aa)). Residue Ser3014 is modified to O-(pantetheine 4'-phosphoryl)serine. The segment at 3098–3503 (VEDVYPCTPM…ELVSSIETLN (406 aa)) is condensation 3. Residues 3730–3806 (PAVTAMQLAI…SLAVRATENT (77 aa)) enclose the Carrier 4 domain. An O-(pantetheine 4'-phosphoryl)serine modification is found at Ser3767. The segment at 3850 to 4204 (QDVLPCTSMQ…GLDEIVEHYA (355 aa)) is condensation 4.

The protein belongs to the NRP synthetase family.

It participates in mycotoxin biosynthesis. Nonribosomal peptide synthetase; part of the gene clusters that mediate the biosynthesis of AM-toxins, host-selective toxins (HSTs) causing Alternaria blotch on apple, a worldwide distributed disease. AM-toxins are cyclic depsipeptides containing the 3 residues 2-hydroxy-isovaleric acid (2-HIV), dehydroalanine, L-alanine which are common for all 3 AM-toxins I to III. The fourth precursor is L-alpha-amino-methoxyphenyl-valeric acid (L-Amv) for AM-toxin I, L-alpha-amino-phenyl-valeric acid (L-Apv) for AM-toxin II, and L-alpha-amino-hydroxyphenyl-valeric acid (L-Ahv) for AM-toxin III. AM-toxins have two target sites for affecting susceptible apple cells; they cause invagination of the plasma membrane and electrolyte loss, and chloroplast disorganization. The non-ribosomal peptide synthetase AMT1 contains 4 catalytic modules and is responsible for activation of each residue in AM-toxin. The aldo-keto reductase AMT2 catalyzes the conversion of 2-keto-isovaleric acid (2-KIV) to 2-hydroxy-isovaleric acid (2-HIV), one of the precursor residues incorporated by AMT1 during AM-toxin biosynthesis, by reduction of its ketone to an alcohol. The cytochrome P450 monooxygenase AMT3 and the thioesterase AMT4 are also important for AM-toxin production, but their exact function within the AM-toxin biosynthesis are not known yet. Up to 21 proteins (including AMT1 to AMT4) are predicted to be involved in AM-toxin biosynthesis since their expression ishighly up-regulated in AM-toxin-producing cultures. The protein is AM-toxin synthetase AMT1 of Alternaria alternata (Alternaria rot fungus).